The sequence spans 794 residues: Phosphoribosylformylglycinamidine synthase subunit PurL (794 aa).

Residue H47 is part of the active site. ATP contacts are provided by Y50 and K89. A Mg(2+)-binding site is contributed by E91. Residues 92–95 and R114 contribute to the substrate site; that span reads SHNH. The active-site Proton acceptor is H93. D115 provides a ligand contact to Mg(2+). Substrate is bound at residue Q238. Residue D266 coordinates Mg(2+). Substrate is bound at residue 310 to 312; the sequence is ESQ. Residues D522 and G559 each coordinate ATP. N560 contributes to the Mg(2+) binding site. Substrate is bound at residue S562.

The protein belongs to the FGAMS family. In terms of assembly, monomer. Part of the FGAM synthase complex composed of 1 PurL, 1 PurQ and 2 PurS subunits.

The protein localises to the cytoplasm. The catalysed reaction is N(2)-formyl-N(1)-(5-phospho-beta-D-ribosyl)glycinamide + L-glutamine + ATP + H2O = 2-formamido-N(1)-(5-O-phospho-beta-D-ribosyl)acetamidine + L-glutamate + ADP + phosphate + H(+). Its pathway is purine metabolism; IMP biosynthesis via de novo pathway; 5-amino-1-(5-phospho-D-ribosyl)imidazole from N(2)-formyl-N(1)-(5-phospho-D-ribosyl)glycinamide: step 1/2. Functionally, part of the phosphoribosylformylglycinamidine synthase complex involved in the purines biosynthetic pathway. Catalyzes the ATP-dependent conversion of formylglycinamide ribonucleotide (FGAR) and glutamine to yield formylglycinamidine ribonucleotide (FGAM) and glutamate. The FGAM synthase complex is composed of three subunits. PurQ produces an ammonia molecule by converting glutamine to glutamate. PurL transfers the ammonia molecule to FGAR to form FGAM in an ATP-dependent manner. PurS interacts with PurQ and PurL and is thought to assist in the transfer of the ammonia molecule from PurQ to PurL. The sequence is that of Phosphoribosylformylglycinamidine synthase subunit PurL from Prochlorococcus marinus (strain MIT 9303).